The sequence spans 272 residues: NH(3)-dependent NAD(+) synthetase (272 aa).

43–50 (GLSGGQDS) lines the ATP pocket. Aspartate 49 lines the Mg(2+) pocket. Arginine 138 is a deamido-NAD(+) binding site. Position 158 (threonine 158) interacts with ATP. Glutamate 163 serves as a coordination point for Mg(2+). Positions 171 and 178 each coordinate deamido-NAD(+). ATP contacts are provided by lysine 187 and threonine 209. A deamido-NAD(+)-binding site is contributed by 258 to 259 (HK).

It belongs to the NAD synthetase family. Homodimer.

It carries out the reaction deamido-NAD(+) + NH4(+) + ATP = AMP + diphosphate + NAD(+) + H(+). Its pathway is cofactor biosynthesis; NAD(+) biosynthesis; NAD(+) from deamido-NAD(+) (ammonia route): step 1/1. Functionally, catalyzes the ATP-dependent amidation of deamido-NAD to form NAD. Uses ammonia as a nitrogen source. In Halalkalibacterium halodurans (strain ATCC BAA-125 / DSM 18197 / FERM 7344 / JCM 9153 / C-125) (Bacillus halodurans), this protein is NH(3)-dependent NAD(+) synthetase.